The following is a 355-amino-acid chain: Holliday junction branch migration complex subunit RuvB (355 aa).

The large ATPase domain (RuvB-L) stretch occupies residues 4–195; the sequence is TDKLTGADRL…FGIVARLEFY (192 aa). ATP-binding positions include Leu34, Arg35, Gly76, Lys79, Thr80, Thr81, 142–144, Arg185, Tyr195, and Arg232; that span reads EDY. Residue Thr80 coordinates Mg(2+). The segment at 196-266 is small ATPAse domain (RuvB-S); the sequence is TPDELARIVA…LADAALEMLD (71 aa). The tract at residues 269–355 is head domain (RuvB-H); sequence SVGFDLMDRK…DGGADLAEGL (87 aa). DNA contacts are provided by Arg305, Arg324, and Arg329.

It belongs to the RuvB family. In terms of assembly, homohexamer. Forms an RuvA(8)-RuvB(12)-Holliday junction (HJ) complex. HJ DNA is sandwiched between 2 RuvA tetramers; dsDNA enters through RuvA and exits via RuvB. An RuvB hexamer assembles on each DNA strand where it exits the tetramer. Each RuvB hexamer is contacted by two RuvA subunits (via domain III) on 2 adjacent RuvB subunits; this complex drives branch migration. In the full resolvosome a probable DNA-RuvA(4)-RuvB(12)-RuvC(2) complex forms which resolves the HJ.

Its subcellular location is the cytoplasm. It carries out the reaction ATP + H2O = ADP + phosphate + H(+). Its function is as follows. The RuvA-RuvB-RuvC complex processes Holliday junction (HJ) DNA during genetic recombination and DNA repair, while the RuvA-RuvB complex plays an important role in the rescue of blocked DNA replication forks via replication fork reversal (RFR). RuvA specifically binds to HJ cruciform DNA, conferring on it an open structure. The RuvB hexamer acts as an ATP-dependent pump, pulling dsDNA into and through the RuvAB complex. RuvB forms 2 homohexamers on either side of HJ DNA bound by 1 or 2 RuvA tetramers; 4 subunits per hexamer contact DNA at a time. Coordinated motions by a converter formed by DNA-disengaged RuvB subunits stimulates ATP hydrolysis and nucleotide exchange. Immobilization of the converter enables RuvB to convert the ATP-contained energy into a lever motion, pulling 2 nucleotides of DNA out of the RuvA tetramer per ATP hydrolyzed, thus driving DNA branch migration. The RuvB motors rotate together with the DNA substrate, which together with the progressing nucleotide cycle form the mechanistic basis for DNA recombination by continuous HJ branch migration. Branch migration allows RuvC to scan DNA until it finds its consensus sequence, where it cleaves and resolves cruciform DNA. The sequence is that of Holliday junction branch migration complex subunit RuvB from Cupriavidus metallidurans (strain ATCC 43123 / DSM 2839 / NBRC 102507 / CH34) (Ralstonia metallidurans).